We begin with the raw amino-acid sequence, 325 residues long: L-lactate dehydrogenase 1 (325 aa).

Residues V17, D38, K43, Y68, and 82–83 (GA) each bind NAD(+). Residues Q85, R91, and 123-126 (NPVD) each bind substrate. Residues 121–123 (AAN) and S146 each bind NAD(+). 151 to 154 (DTAR) contacts substrate. The beta-D-fructose 1,6-bisphosphate site is built by R156 and H171. The active-site Proton acceptor is the H178. Y223 is subject to Phosphotyrosine. Position 232 (T232) interacts with substrate.

It belongs to the LDH/MDH superfamily. LDH family. In terms of assembly, homotetramer.

It is found in the cytoplasm. It catalyses the reaction (S)-lactate + NAD(+) = pyruvate + NADH + H(+). Its pathway is fermentation; pyruvate fermentation to lactate; (S)-lactate from pyruvate: step 1/1. Allosterically activated by fructose 1,6-bisphosphate (FBP). Catalyzes the conversion of lactate to pyruvate. This chain is L-lactate dehydrogenase 1, found in Lactococcus lactis subsp. cremoris (Streptococcus cremoris).